Reading from the N-terminus, the 180-residue chain is ATP synthase subunit delta (180 aa).

It belongs to the ATPase delta chain family. As to quaternary structure, F-type ATPases have 2 components, F(1) - the catalytic core - and F(0) - the membrane proton channel. F(1) has five subunits: alpha(3), beta(3), gamma(1), delta(1), epsilon(1). F(0) has three main subunits: a(1), b(2) and c(10-14). The alpha and beta chains form an alternating ring which encloses part of the gamma chain. F(1) is attached to F(0) by a central stalk formed by the gamma and epsilon chains, while a peripheral stalk is formed by the delta and b chains.

The protein resides in the cell membrane. In terms of biological role, f(1)F(0) ATP synthase produces ATP from ADP in the presence of a proton or sodium gradient. F-type ATPases consist of two structural domains, F(1) containing the extramembraneous catalytic core and F(0) containing the membrane proton channel, linked together by a central stalk and a peripheral stalk. During catalysis, ATP synthesis in the catalytic domain of F(1) is coupled via a rotary mechanism of the central stalk subunits to proton translocation. This protein is part of the stalk that links CF(0) to CF(1). It either transmits conformational changes from CF(0) to CF(1) or is implicated in proton conduction. This is ATP synthase subunit delta from Bacillus mycoides (strain KBAB4) (Bacillus weihenstephanensis).